Consider the following 394-residue polypeptide: Acetyl-CoA acetyltransferase (394 aa).

The active-site Acyl-thioester intermediate is Cys-89. Catalysis depends on proton acceptor residues His-350 and Cys-380.

Belongs to the thiolase-like superfamily. Thiolase family. Homotetramer.

The protein localises to the cytoplasm. It carries out the reaction 2 acetyl-CoA = acetoacetyl-CoA + CoA. It functions in the pathway biopolymer metabolism; poly-(R)-3-hydroxybutanoate biosynthesis. Its pathway is metabolic intermediate biosynthesis; (R)-mevalonate biosynthesis; (R)-mevalonate from acetyl-CoA: step 1/3. This is Acetyl-CoA acetyltransferase from Thiocystis violacea.